Consider the following 246-residue polypeptide: MAVTMRQMLEAGVHFGHQTRFWNPKMAPFIFGHRNKIHIINLEKTLPMFTDAQKYVRQLAANRGTILFVGTKRQSRDTIAQEAQRAGMPYVNARWLGGMMTNFKTLKVSIKRLKDMEAAVEAGETEKMSKKEALLFEREIAKLQKSIGGVKDMGGIPDAIFVIDVGYHKIAVTEANKLGVPVIAVVDTNHSPEGVDYVIPGNDDSSKAVALYAQGVADAILEGRANAVNEVVQAVRGDDEYVEENA.

It belongs to the universal ribosomal protein uS2 family.

This is Small ribosomal subunit protein uS2 from Burkholderia vietnamiensis (strain G4 / LMG 22486) (Burkholderia cepacia (strain R1808)).